Reading from the N-terminus, the 72-residue chain is General transcription factor IIH subunit 5 (72 aa).

Belongs to the TFB5 family. In terms of assembly, component of the 7-subunit TFIIH core complex composed of XPB/repB, XPD/repD, gtf2h1, gtf2h2, gtf2h3, gtf2h4 and gtf2h5, which is active in NER. The core complex associates with the 3-subunit CDK-activating kinase (CAK) module composed of cycH/cyclin H, cdk7 and mnat1 to form the 10-subunit holoenzyme (holo-TFIIH) active in transcription.

The protein resides in the nucleus. Its function is as follows. Component of the general transcription and DNA repair factor IIH (TFIIH) core complex, which is involved in general and transcription-coupled nucleotide excision repair (NER) of damaged DNA and, when complexed to CAK, in RNA transcription by RNA polymerase II. In NER, TFIIH acts by opening DNA around the lesion to allow the excision of the damaged oligonucleotide and its replacement by a new DNA fragment. In transcription, TFIIH has an essential role in transcription initiation. When the pre-initiation complex (PIC) has been established, TFIIH is required for promoter opening and promoter escape. Phosphorylation of the C-terminal tail (CTD) of the largest subunit of RNA polymerase II by the kinase module CAK controls the initiation of transcription. This chain is General transcription factor IIH subunit 5 (gtf2h5), found in Dictyostelium discoideum (Social amoeba).